The chain runs to 332 residues: L-lactate dehydrogenase C chain (332 aa).

At serine 2 the chain carries Blocked amino end (Ser). NAD(+) contacts are provided by residues 29-57 (GNVG…DENK) and arginine 99. Substrate-binding residues include arginine 106, asparagine 138, and arginine 169. Asparagine 138 is an NAD(+) binding site. Histidine 193 acts as the Proton acceptor in catalysis. Residue threonine 248 coordinates substrate.

The protein belongs to the LDH/MDH superfamily. LDH family. Homotetramer. Interacts with RABL2/RABL2A; binds preferentially to GTP-bound RABL2.

The protein localises to the cytoplasm. It catalyses the reaction (S)-lactate + NAD(+) = pyruvate + NADH + H(+). Its pathway is fermentation; pyruvate fermentation to lactate; (S)-lactate from pyruvate: step 1/1. Functionally, possible role in sperm motility. The polypeptide is L-lactate dehydrogenase C chain (Ldhc) (Rattus norvegicus (Rat)).